The chain runs to 288 residues: Acetyl-coenzyme A carboxylase carboxyl transferase subunit beta (288 aa).

A CoA carboxyltransferase N-terminal domain is found at 34 to 288 (LFAKCPACKH…HLVAFHGGGQ (255 aa)). Zn(2+) contacts are provided by Cys38, Cys41, Cys56, and Cys59. A C4-type zinc finger spans residues 38–59 (CPACKHMIYKKDLGLAKICPTC).

The protein belongs to the AccD/PCCB family. As to quaternary structure, acetyl-CoA carboxylase is a heterohexamer composed of biotin carboxyl carrier protein (AccB), biotin carboxylase (AccC) and two subunits each of ACCase subunit alpha (AccA) and ACCase subunit beta (AccD). Zn(2+) serves as cofactor.

The protein localises to the cytoplasm. It carries out the reaction N(6)-carboxybiotinyl-L-lysyl-[protein] + acetyl-CoA = N(6)-biotinyl-L-lysyl-[protein] + malonyl-CoA. It participates in lipid metabolism; malonyl-CoA biosynthesis; malonyl-CoA from acetyl-CoA: step 1/1. Its function is as follows. Component of the acetyl coenzyme A carboxylase (ACC) complex. Biotin carboxylase (BC) catalyzes the carboxylation of biotin on its carrier protein (BCCP) and then the CO(2) group is transferred by the transcarboxylase to acetyl-CoA to form malonyl-CoA. In Streptococcus pyogenes serotype M6 (strain ATCC BAA-946 / MGAS10394), this protein is Acetyl-coenzyme A carboxylase carboxyl transferase subunit beta.